The primary structure comprises 194 residues: Oligoribonuclease (194 aa).

The Exonuclease domain maps to leucine 11–leucine 174. Residue tyrosine 132 is part of the active site.

The protein belongs to the oligoribonuclease family.

The protein resides in the cytoplasm. Functionally, 3'-to-5' exoribonuclease specific for small oligoribonucleotides. This chain is Oligoribonuclease, found in Xanthomonas axonopodis pv. citri (strain 306).